The primary structure comprises 271 residues: Beta-lysine N(6)-acetyltransferase (271 aa).

A disordered region spans residues 86–122 (LRKDRGTGKNQKKKKISRKKDNWKKRKEKSRLPEGYT). A compositionally biased stretch (basic residues) spans 95-114 (NQKKKKISRKKDNWKKRKEK). The N-acetyltransferase domain occupies 121 to 269 (YTLRPAVQAD…GFEDMNIWCR (149 aa)).

Belongs to the acetyltransferase family.

The catalysed reaction is (3S)-3,6-diaminohexanoate + acetyl-CoA = (3S)-6-acetamido-3-aminohexanoate + CoA + H(+). Its function is as follows. Catalyzes the acetylation of beta-lysine to N6-acetyl-beta-lysine, a compatible solute produced by methanogenic archaea that helps cells to cope with salt stress. The polypeptide is Beta-lysine N(6)-acetyltransferase (Methanosarcina mazei (strain ATCC BAA-159 / DSM 3647 / Goe1 / Go1 / JCM 11833 / OCM 88) (Methanosarcina frisia)).